The chain runs to 386 residues: Succinate--CoA ligase [ADP-forming] subunit beta (386 aa).

Residues K9 to D244 enclose the ATP-grasp domain. ATP contacts are provided by residues K46, G53 to G55, E99, S102, and E107. Mg(2+) contacts are provided by N199 and D213. Substrate is bound by residues N264 and G321–M323.

It belongs to the succinate/malate CoA ligase beta subunit family. Heterotetramer of two alpha and two beta subunits. Mg(2+) is required as a cofactor.

It carries out the reaction succinate + ATP + CoA = succinyl-CoA + ADP + phosphate. The enzyme catalyses GTP + succinate + CoA = succinyl-CoA + GDP + phosphate. It functions in the pathway carbohydrate metabolism; tricarboxylic acid cycle; succinate from succinyl-CoA (ligase route): step 1/1. In terms of biological role, succinyl-CoA synthetase functions in the citric acid cycle (TCA), coupling the hydrolysis of succinyl-CoA to the synthesis of either ATP or GTP and thus represents the only step of substrate-level phosphorylation in the TCA. The beta subunit provides nucleotide specificity of the enzyme and binds the substrate succinate, while the binding sites for coenzyme A and phosphate are found in the alpha subunit. The polypeptide is Succinate--CoA ligase [ADP-forming] subunit beta (Pelagibacter ubique (strain HTCC1062)).